We begin with the raw amino-acid sequence, 134 residues long: Arsenate reductase 1 (134 aa).

Catalysis depends on nucleophile residues Cys11, Cys83, and Cys90. 2 disulfides stabilise this stretch: Cys11-Cys83 and Cys83-Cys90.

The protein belongs to the low molecular weight phosphotyrosine protein phosphatase family. Thioredoxin-coupled ArsC subfamily.

It localises to the cytoplasm. It carries out the reaction arsenate + [thioredoxin]-dithiol + H(+) = arsenite + [thioredoxin]-disulfide + H2O. In terms of biological role, catalyzes the reduction of arsenate [As(V)] to arsenite [As(III)]. In Bacillus cereus (strain ATCC 10987 / NRS 248), this protein is Arsenate reductase 1.